The sequence spans 589 residues: Protein kinase G11A (589 aa).

The interval 1 to 167 (MASKAMPRAP…SACSSISSVT (167 aa)) is disordered. Composition is skewed to polar residues over residues 15 to 36 (NLQSLKLCSQNDSSLETTSPSK) and 63 to 76 (TQHQNESIDLTGSN). Residues 91 to 100 (RLADEEKGVV) show a composition bias toward basic and acidic residues. Positions 142-165 (SSSRCRPSTSSDVSDESACSSISS) are enriched in low complexity. The Protein kinase domain maps to 195 to 533 (FKLLKKLGCG…ATEIKQHPFF (339 aa)). Residues 201-209 (LGCGDIGSV) and lysine 224 contribute to the ATP site. Aspartate 320 serves as the catalytic Proton acceptor. Residues 551–589 (RPVEIERPPKQPVSTSEPAAAPSDAAQKSSDSYLEFDFF) are disordered.

The protein belongs to the protein kinase superfamily. Ser/Thr protein kinase family.

The catalysed reaction is L-seryl-[protein] + ATP = O-phospho-L-seryl-[protein] + ADP + H(+). It carries out the reaction L-threonyl-[protein] + ATP = O-phospho-L-threonyl-[protein] + ADP + H(+). In terms of biological role, may play a role in the regulation of metabolism and signal transduction processes. The chain is Protein kinase G11A from Oryza sativa subsp. japonica (Rice).